A 348-amino-acid polypeptide reads, in one-letter code: NADH-ubiquinone oxidoreductase chain 2 (348 aa).

Helical transmembrane passes span 3-23, 25-45, 60-80, 99-119, 122-142, 150-170, 178-196, 200-219, 246-266, 274-294, and 328-348; these read PYVL…TFAS, HWLL…RLMA, FLTQ…NAWA, MMAL…PEVL, LDLT…FALI, NPML…WGGL, ILAY…ILQY, LTLI…FLSL, LTLL…KWLI, DLPA…YFYL, and LMMI…ALFF.

This sequence belongs to the complex I subunit 2 family.

It is found in the mitochondrion inner membrane. The enzyme catalyses a ubiquinone + NADH + 5 H(+)(in) = a ubiquinol + NAD(+) + 4 H(+)(out). In terms of biological role, core subunit of the mitochondrial membrane respiratory chain NADH dehydrogenase (Complex I) that is believed to belong to the minimal assembly required for catalysis. Complex I functions in the transfer of electrons from NADH to the respiratory chain. The immediate electron acceptor for the enzyme is believed to be ubiquinone. In Formosania lacustris (Oriental stream loach), this protein is NADH-ubiquinone oxidoreductase chain 2 (MT-ND2).